We begin with the raw amino-acid sequence, 876 residues long: Alanine--tRNA ligase (876 aa).

Residue Lys-74 is modified to N6-acetyllysine. Zn(2+)-binding residues include His-564, His-568, Cys-666, and His-670.

This sequence belongs to the class-II aminoacyl-tRNA synthetase family. In terms of assembly, homotetramer. The cofactor is Zn(2+).

Its subcellular location is the cytoplasm. It catalyses the reaction tRNA(Ala) + L-alanine + ATP = L-alanyl-tRNA(Ala) + AMP + diphosphate. Functionally, catalyzes the attachment of alanine to tRNA(Ala) in a two-step reaction: alanine is first activated by ATP to form Ala-AMP and then transferred to the acceptor end of tRNA(Ala). Also edits incorrectly charged Ser-tRNA(Ala) and Gly-tRNA(Ala) via its editing domain. The sequence is that of Alanine--tRNA ligase from Shigella boydii serotype 4 (strain Sb227).